The chain runs to 1113 residues: MLKTLLFILIFFNIPIIAIEEIPDIKENGEKSSYTQFDNGAKLEVNKEHKRVIKIGHIGAVGVMPNDARILNISKENLIEEGLVGDDIEFEIVSRQACSESFEGVAVAAELYHVHQVRAFIGPYCAAELEAVTKMATFWNIPIISYSSVPNAVSDRSVYKTLARVSSKNTNSIAEATVALLLHYKWLKVAIATNTGSTAFERVSIFEEIMHREGVTIVKKVMFDENTDANEMMNSGQLGDLAANARIIICLFSSTKELSKEFMQATYTMRMNNAEYAYIIPWLQSGTKDLTPWIGADGEMLQRVKDHYANAIIVDDVNGFDDSVVSSFVEKIEKHGMQKSDIDVTNINGYLHLFDSLKLYALAIRKVLNETDNEAYVTNGQFIWNRMRRMKFEGVVSRSSSEENKDAGAIGTVLMDDVADRAPIFSAFYISPNRDKVMKMVNMESELISNCDGLKNKSGCFQLKINDIKSGFWPSEDGSMPLDEPICGYRGQRCSYLLEISVGSLIILLILISVVFFFLFRYCENKQLEKMPWRIFHDDLQFIDEEQVKSMMSVGSVTTKLSNIQTGQKQHAIIGVNTHTTYHRYKQRRPIKFIKEDMQLLTQMKQAVHDNLNPFLGAAFNEKEEMLVLWKFCSRGTIQDIIYNANVVLDEKFHGAFVRDITLGLEYLHASPIGYHGSLTPWCCLIDRNWMVKLSDYGIANPLERWEKQGAIEIAAAKDSDDKSQASQATSIIYMAPELLKNRETNKRRGMDQSWVKQSMLRRQAGDIYSFGMVMYEILFRSLPFRDNTNISELVDYLADGSKTVSPEIQNQMGLHPDLNALLRDCWSENPEIRPSIRRVRLNTEMVLKTKGSLVDQMMKMMEQYANNLEKLVAERTGMLEEANIRADQLLTQLLPAYVANELKMGRSVAPKLYSSATILFSDIVGFTTICSGSTPLEVVNMLNGLYTGFDECITRNKSYKVETIGDAYMVVSGIPEENEYNHSRNIANTALDMRQYLTGYQIPHRPTHRVRCRWGFHTGSVAAGVVGLTCPRYCLFGDTVNVSSRMESTGTPGMIQMSEEAHMHIRAHHPVFTTTERGEVQVKGKGTCRTFWLEDRVGDASTTNYIQNVEGV.

The signal sequence occupies residues Met1–Ala18. The Extracellular portion of the chain corresponds to Ile19 to Glu499. N-linked (GlcNAc...) asparagine glycosylation is found at Asn72, Asn369, and Asn456. A helical membrane pass occupies residues Ile500–Phe520. Over Arg521 to Val1113 the chain is Cytoplasmic. The Protein kinase domain maps to Ile543–Leu848. A coiled-coil region spans residues Ser853–Asn884. Residues Thr918–Glu1048 enclose the Guanylate cyclase domain. 3 residues coordinate Mg(2+): Asp923, Ile924, and Asp967.

It belongs to the adenylyl cyclase class-4/guanylyl cyclase family. Expressed specifically in AFD sensory neurons.

Its subcellular location is the cell membrane. The protein localises to the cell projection. The protein resides in the cilium. The catalysed reaction is GTP = 3',5'-cyclic GMP + diphosphate. Guanylate cyclase involved in the production of the second messenger cGMP. Regulates thermotaxis responses in AFD sensory neurons. May regulate AFD neuronal activity such as calcium responses to temperature gradients. The polypeptide is Receptor-type guanylate cyclase gcy-18 (Caenorhabditis elegans).